The chain runs to 99 residues: Integration host factor subunit alpha (99 aa).

The protein belongs to the bacterial histone-like protein family. Heterodimer of an alpha and a beta chain.

Functionally, this protein is one of the two subunits of integration host factor, a specific DNA-binding protein that functions in genetic recombination as well as in transcriptional and translational control. The protein is Integration host factor subunit alpha of Psychrobacter cryohalolentis (strain ATCC BAA-1226 / DSM 17306 / VKM B-2378 / K5).